A 290-amino-acid chain; its full sequence is MLKSQRVTTMKESLISFIREKIEEYNYRGAVVGVSGGVDSAVVLSLCVQALGKDRVFALILPERDSSKDSLKDAVDLCETLGVEYRKRSITPILRKIGAYRLFPPRFFLPNSIVKRYVLNRWNTLSKDPFLDDLRNTGPEEFLKGLAYYRIKHRIRMCLLYFEAEKRGYAVVGTTNRTEYLTGLYVKWGDEAVDIEPIMHLYKTQVFELAKEMNVPEKILKKPPSPDLIPGITDEMAFNMSYLELDRILMKLEKNEDLSDEDPKKVERVKKILEFSEKYRRDIPITFDRI.

Position 33 to 40 (33 to 40 (GVSGGVDS)) interacts with ATP. D39 lines the Mg(2+) pocket. R154 is a deamido-NAD(+) binding site. T174 lines the ATP pocket. Residue E179 participates in Mg(2+) binding. 2 residues coordinate deamido-NAD(+): K187 and D194. K203 and S225 together coordinate ATP.

It belongs to the NAD synthetase family. As to quaternary structure, homodimer.

It catalyses the reaction deamido-NAD(+) + NH4(+) + ATP = AMP + diphosphate + NAD(+) + H(+). It functions in the pathway cofactor biosynthesis; NAD(+) biosynthesis; NAD(+) from deamido-NAD(+) (ammonia route): step 1/1. Catalyzes the ATP-dependent amidation of deamido-NAD to form NAD. Uses ammonia as a nitrogen source. The polypeptide is NH(3)-dependent NAD(+) synthetase (Thermotoga neapolitana (strain ATCC 49049 / DSM 4359 / NBRC 107923 / NS-E)).